A 540-amino-acid chain; its full sequence is Flavin-dependent halogenase ptaM (540 aa).

Positions 1-21 are cleaved as a signal peptide; sequence MSVPAQTSVLIVGGGPAGSYA. FAD is bound by residues G14, A17, and E47. 4 N-linked (GlcNAc...) asparagine glycosylation sites follow: N159, N192, N204, and N243. S330 and G331 together coordinate chloride. Residues N480, N491, and N523 are each glycosylated (N-linked (GlcNAc...) asparagine).

Belongs to the flavin-dependent halogenase family.

It participates in secondary metabolite biosynthesis. Flavin-dependent halogenase; part of the gene cluster that mediates the biosynthesis of pestheic acid, a diphenyl ether which is a biosynthetic precursor of the unique chloropupukeananes. The biosynthesis initiates from condensation of acetate and malonate units catalyzed by the non-reducing PKS ptaA. As the ptaA protein is TE/CLC domain-deficient, hydrolysis and Claisen cyclization of the polyketide could be catalyzed by ptaB containing a beta-lactamase domain. The ptaB protein might hydrolyze the thioester bond between the ACP of ptaA and the intermediate to release atrochrysone carboxylic acid, which is spontaneously dehydrated to form endocrocin anthrone. Endocrocin anthrone is then converted to endocrocin, catalyzed by the anthrone oxygenase ptaC. Spontaneous decarboxylation of endocrocin occurs to generate emodin. An O-methyltransferase (ptaH or ptaI) could methylate emodin to form physcion. PtaJ could then catalyze the oxidative cleavage of physcion, and rotation of the intermediate could then afford desmethylisosulochrin. PtaF, a putative NADH-dependent oxidoreductase, might also participate in the oxidative cleavage step. Desmethylisosulochrin is then transformed by another O-methyltransferase (ptaH or ptaI) to form isosulochrin. Chlorination of isosulochrin by ptaM in the cyclohexadienone B ring then produces chloroisosulochrin. PtaE is responsible for the oxidative coupling reactions of both benzophenones isosulochrin and chloroisosulochrin to RES-1214-1 and pestheic acid respectively, regardless of chlorination. This is Flavin-dependent halogenase ptaM from Pestalotiopsis fici (strain W106-1 / CGMCC3.15140).